The primary structure comprises 36 residues: VFGTLGSTDDSLFGRYKQDIFNDHRGHLQGQAYGSR.

It localises to the secreted. Functionally, antibacterial protein. The chain is Gloverin from Heliothis virescens (Tobacco budworm moth).